The sequence spans 266 residues: Enterotoxin type C-1 (266 aa).

The first 27 residues, 1 to 27, serve as a signal peptide directing secretion; it reads MNKSRFISCVILIFALILVLFTPNVLA. A disulfide bridge connects residues Cys-120 and Cys-137.

Belongs to the staphylococcal/streptococcal toxin family. Interacts with host MHC class II molecules composed of alpha/HLA-DRA and beta/HLA-DRB1 chains.

The protein localises to the secreted. Its function is as follows. Staphylococcal enterotoxin that activates the host immune system by binding as unprocessed molecules to major histocompatibility (MHC) complex class II and T-cell receptor (TCR) molecules. In turn, this ternary complex activates a large number of T-lymphocytes initiating a systemic release of pro-inflammatory cytokines. Inhibits SEC1-mediated T-cell activation in the absence of MHC class II by competing with SEC1 for binding to the host TCR. Also causes the intoxication staphylococcal food poisoning syndrome. In Staphylococcus aureus, this protein is Enterotoxin type C-1 (entC1).